The sequence spans 275 residues: Phosphate import ATP-binding protein PstB (275 aa).

Residues 29 to 270 (LEIKDLDLYY…PNKKKTEDYI (242 aa)) enclose the ABC transporter domain. ATP is bound at residue 61-68 (GPSGCGKS).

The protein belongs to the ABC transporter superfamily. Phosphate importer (TC 3.A.1.7) family. As to quaternary structure, the complex is composed of two ATP-binding proteins (PstB), two transmembrane proteins (PstC and PstA) and a solute-binding protein (PstS).

The protein resides in the cell inner membrane. The enzyme catalyses phosphate(out) + ATP + H2O = ADP + 2 phosphate(in) + H(+). Functionally, part of the ABC transporter complex PstSACB involved in phosphate import. Responsible for energy coupling to the transport system. This is Phosphate import ATP-binding protein PstB from Pseudoalteromonas translucida (strain TAC 125).